A 184-amino-acid polypeptide reads, in one-letter code: Mitochondrial translation release factor in rescue (184 aa).

Residues 1–98 (MSSRSTWALL…HVPSGIVVKC (98 aa)) constitute a mitochondrion transit peptide. The GGQ domain stretch occupies residues 60–124 (ESELEEQFVK…LQEKVDVFYN (65 aa)). The GGQ signature appears at 74–76 (GGQ). Residue Gln76 is modified to N5-methylglutamine. Residues 130–178 (VHKEKLEAERRKRERKKRAKETLEKKKLLKELREASQNITEKKADADGI) are a coiled coil. Positions 132–184 (KEKLEAERRKRERKKRAKETLEKKKLLKELREASQNITEKKADADGIPRGFQE) are disordered. Positions 149 to 184 (KETLEKKKLLKELREASQNITEKKADADGIPRGFQE) are enriched in basic and acidic residues.

It belongs to the prokaryotic/mitochondrial release factor family. As to quaternary structure, interacts (via C-terminus) with MTRES1 (via S4 domain). Associates with mitoribosomal S39 large subunit, peptidyl tRNA and nascent chain. In terms of processing, methylation of glutamine in the GGQ triplet by HEMK1.

The protein resides in the mitochondrion. Functionally, part of a mitoribosome-associated quality control pathway that prevents aberrant translation by responding to interruptions during elongation. As heterodimer with MTRES1, ejects the unfinished nascent chain and peptidyl transfer RNA (tRNA), respectively, from stalled ribosomes. Recruitment of mitoribosome biogenesis factors to these quality control intermediates suggests additional roles for MTRES1 and MTRF during mitoribosome rescue. The chain is Mitochondrial translation release factor in rescue from Mus musculus (Mouse).